The following is a 122-amino-acid chain: Large ribosomal subunit protein uL18 (122 aa).

It belongs to the universal ribosomal protein uL18 family. Part of the 50S ribosomal subunit; part of the 5S rRNA/L5/L18/L25 subcomplex. Contacts the 5S and 23S rRNAs.

Its function is as follows. This is one of the proteins that bind and probably mediate the attachment of the 5S RNA into the large ribosomal subunit, where it forms part of the central protuberance. This chain is Large ribosomal subunit protein uL18, found in Thermotoga neapolitana (strain ATCC 49049 / DSM 4359 / NBRC 107923 / NS-E).